A 460-amino-acid polypeptide reads, in one-letter code: Cysteine--tRNA ligase (460 aa).

Cys-28 provides a ligand contact to Zn(2+). The short motif at 30–40 (MTVYDYCHLGH) is the 'HIGH' region element. Residues Cys-209, His-234, and Glu-238 each contribute to the Zn(2+) site. A 'KMSKS' region motif is present at residues 266–270 (KMSKS). ATP is bound at residue Lys-269.

Belongs to the class-I aminoacyl-tRNA synthetase family. Monomer. Requires Zn(2+) as cofactor.

Its subcellular location is the cytoplasm. It carries out the reaction tRNA(Cys) + L-cysteine + ATP = L-cysteinyl-tRNA(Cys) + AMP + diphosphate. The sequence is that of Cysteine--tRNA ligase from Pseudomonas aeruginosa (strain UCBPP-PA14).